The sequence spans 867 residues: Protein translocase subunit SecA (867 aa).

Residues Gln85, 103 to 107 (GEGKT), and Asp491 contribute to the ATP site.

Belongs to the SecA family. In terms of assembly, monomer and homodimer. Part of the essential Sec protein translocation apparatus which comprises SecA, SecYEG and auxiliary proteins SecDF. Other proteins may also be involved.

It is found in the cell membrane. The protein localises to the cytoplasm. The enzyme catalyses ATP + H2O + cellular proteinSide 1 = ADP + phosphate + cellular proteinSide 2.. Its function is as follows. Part of the Sec protein translocase complex. Interacts with the SecYEG preprotein conducting channel. Has a central role in coupling the hydrolysis of ATP to the transfer of proteins into and across the cell membrane, serving as an ATP-driven molecular motor driving the stepwise translocation of polypeptide chains across the membrane. The polypeptide is Protein translocase subunit SecA (Mycoplasmopsis pulmonis (strain UAB CTIP) (Mycoplasma pulmonis)).